The primary structure comprises 193 residues: Ion-translocating oxidoreductase complex subunit A (193 aa).

The next 6 membrane-spanning stretches (helical) occupy residues 5–25, 39–59, 72–92, 102–122, 134–154, and 171–191; these read ILLI…FLGL, IGMG…AYLV, LRTL…EMVI, LLGI…VALL, VIYG…FAAL, and SIAL…SGLV.

It belongs to the NqrDE/RnfAE family. The complex is composed of six subunits: RnfA, RnfB, RnfC, RnfD, RnfE and RnfG.

Its subcellular location is the cell inner membrane. Functionally, part of a membrane-bound complex that couples electron transfer with translocation of ions across the membrane. The sequence is that of Ion-translocating oxidoreductase complex subunit A from Histophilus somni (strain 2336) (Haemophilus somnus).